An 848-amino-acid polypeptide reads, in one-letter code: Protein NETWORKED 2C (848 aa).

Residues 10 to 90 enclose the NAB domain; it reads YSWWWASHVR…ERYDHISKEL (81 aa). The segment at 108–141 is disordered; that stretch reads FAMNEDDDDDAPVSPRHHKNKTSNKNVPKVPDLP. 4 coiled-coil regions span residues 172–204, 241–278, 305–454, and 752–797; these read LSKT…SYEN, EAQI…SRKQ, SEKE…KATN, and AKFE…SEEF.

This sequence belongs to the NET family.

In terms of biological role, plant-specific actin binding protein. May be part of a membrane-cytoskeletal adapter complex. In Arabidopsis thaliana (Mouse-ear cress), this protein is Protein NETWORKED 2C.